Reading from the N-terminus, the 144-residue chain is 3-dehydroquinate dehydratase (144 aa).

The active-site Proton acceptor is Y22. 3 residues coordinate substrate: N73, H79, and D86. The active-site Proton donor is H99. Substrate is bound by residues 100–101 and R110; that span reads LS.

The protein belongs to the type-II 3-dehydroquinase family. Homododecamer.

It carries out the reaction 3-dehydroquinate = 3-dehydroshikimate + H2O. The protein operates within metabolic intermediate biosynthesis; chorismate biosynthesis; chorismate from D-erythrose 4-phosphate and phosphoenolpyruvate: step 3/7. In terms of biological role, catalyzes a trans-dehydration via an enolate intermediate. This is 3-dehydroquinate dehydratase from Herpetosiphon aurantiacus (strain ATCC 23779 / DSM 785 / 114-95).